Here is a 200-residue protein sequence, read N- to C-terminus: MFAELAPYLSNPRQTLAQLLNFALVLSTAFMGWKALSVYTNSSSPIVVVLSGSMEPAFQRGDLLFLWNNSPRAEVGEIVVYNVQGKDIPIVHRVIKAFGTGDGGKKSQRRLEREADKRSGPGLSSPVSHQMLTKGDNNIADDTELYAQGQDYLDRKLDIVGSVRGYIPAVGYVTIMLAENPWMKTVLLGIMGVMVMLQRE.

Residues 1 to 15 (MFAELAPYLSNPRQT) are Cytoplasmic-facing. A helical; Signal-anchor for type II membrane protein transmembrane segment spans residues 16–33 (LAQLLNFALVLSTAFMGW). Over 34–200 (KALSVYTNSS…MGVMVMLQRE (167 aa)) the chain is Lumenal. A glycan (N-linked (GlcNAc...) asparagine) is linked at Asn-41. Catalysis depends on charge relay system residues Ser-53 and His-92. The disordered stretch occupies residues 101 to 134 (GDGGKKSQRRLEREADKRSGPGLSSPVSHQMLTK). Residues 103–119 (GGKKSQRRLEREADKRS) are compositionally biased toward basic and acidic residues. Catalysis depends on Asp-142, which acts as the Charge relay system. Residues 186-197 (VLLGIMGVMVML) form a C-terminal short (CTS) helix region.

This sequence belongs to the peptidase S26B family. Component of the signal peptidase complex (SPC) composed of a catalytic subunit SEC11 and three accessory subunits SPC1, SPC2 and SPC3. The complex induces a local thinning of the ER membrane which is used to measure the length of the signal peptide (SP) h-region of protein substrates. This ensures the selectivity of the complex towards h-regions shorter than 18-20 amino acids. SPC associates with the translocon complex.

The protein localises to the endoplasmic reticulum membrane. The catalysed reaction is Cleavage of hydrophobic, N-terminal signal or leader sequences from secreted and periplasmic proteins.. Its function is as follows. Catalytic component of the signal peptidase complex (SPC) which catalyzes the cleavage of N-terminal signal sequences from nascent proteins as they are translocated into the lumen of the endoplasmic reticulum. Specifically cleaves N-terminal signal peptides that contain a hydrophobic alpha-helix (h-region) shorter than 18-20 amino acids. This is Signal peptidase complex catalytic subunit SEC11 (SEC11) from Arthroderma benhamiae (strain ATCC MYA-4681 / CBS 112371) (Trichophyton mentagrophytes).